The chain runs to 233 residues: Type II methyltransferase M.MunI (233 aa).

The protein belongs to the MT-A70-like family.

It carries out the reaction a 2'-deoxyadenosine in DNA + S-adenosyl-L-methionine = an N(6)-methyl-2'-deoxyadenosine in DNA + S-adenosyl-L-homocysteine + H(+). In terms of biological role, a methylase that recognizes the double-stranded sequence 5'-CAATTG-3', methylates A-3 on both strands, and protects the DNA from cleavage by the MunI endonuclease. The chain is Type II methyltransferase M.MunI from Mycoplasma sp.